The primary structure comprises 295 residues: Bifunctional protein FolD (295 aa).

NADP(+) is bound by residues G166–S168, S195, and I236.

It belongs to the tetrahydrofolate dehydrogenase/cyclohydrolase family. In terms of assembly, homodimer.

The catalysed reaction is (6R)-5,10-methylene-5,6,7,8-tetrahydrofolate + NADP(+) = (6R)-5,10-methenyltetrahydrofolate + NADPH. It carries out the reaction (6R)-5,10-methenyltetrahydrofolate + H2O = (6R)-10-formyltetrahydrofolate + H(+). It participates in one-carbon metabolism; tetrahydrofolate interconversion. Catalyzes the oxidation of 5,10-methylenetetrahydrofolate to 5,10-methenyltetrahydrofolate and then the hydrolysis of 5,10-methenyltetrahydrofolate to 10-formyltetrahydrofolate. The sequence is that of Bifunctional protein FolD from Pelodictyon phaeoclathratiforme (strain DSM 5477 / BU-1).